The chain runs to 78 residues: Large ribosomal subunit protein bL28 (78 aa).

Residues Met1 to Lys24 form a disordered region.

This sequence belongs to the bacterial ribosomal protein bL28 family.

This chain is Large ribosomal subunit protein bL28, found in Chromohalobacter salexigens (strain ATCC BAA-138 / DSM 3043 / CIP 106854 / NCIMB 13768 / 1H11).